A 73-amino-acid polypeptide reads, in one-letter code: U3-agatoxin-Ao1j (73 aa).

The first 20 residues, 1–20 (MRTIISLLLLSAMVFAVIEA), serve as a signal peptide directing secretion. Residues 21-34 (ISLEEGLQLFEGER) constitute a propeptide that is removed on maturation. Disulfide bonds link Cys-36/Cys-52, Cys-43/Cys-57, Cys-51/Cys-67, and Cys-59/Cys-65. At Ser-71 the chain carries Serine amide.

The protein belongs to the neurotoxin 07 (Beta/delta-agtx) family. 03 (aga-4) subfamily. Aga sub-subfamily. Expressed by the venom gland.

It is found in the secreted. In terms of biological role, insecticidal neurotoxin that induces an irreversible spastic paralysis when injected into insects. Modifies presynaptic voltage-gated sodium channels (Nav), causing them to open at the normal resting potential of the nerve. This leads to spontaneous release of neurotransmitter and repetitive action potentials in motor neurons. This chain is U3-agatoxin-Ao1j, found in Agelena orientalis (Funnel-web spider).